A 117-amino-acid polypeptide reads, in one-letter code: Putative pterin-4-alpha-carbinolamine dehydratase (117 aa).

It belongs to the pterin-4-alpha-carbinolamine dehydratase family.

It carries out the reaction (4aS,6R)-4a-hydroxy-L-erythro-5,6,7,8-tetrahydrobiopterin = (6R)-L-erythro-6,7-dihydrobiopterin + H2O. In Azoarcus sp. (strain BH72), this protein is Putative pterin-4-alpha-carbinolamine dehydratase.